Here is a 423-residue protein sequence, read N- to C-terminus: Kynureninase (423 aa).

Residues Leu105, Ser106, Phe133–Asp136, Asp218, His221, and Tyr243 contribute to the pyridoxal 5'-phosphate site. Lys244 is subject to N6-(pyridoxal phosphate)lysine. Positions 273 and 301 each coordinate pyridoxal 5'-phosphate.

It belongs to the kynureninase family. Homodimer. The cofactor is pyridoxal 5'-phosphate.

It carries out the reaction L-kynurenine + H2O = anthranilate + L-alanine + H(+). The catalysed reaction is 3-hydroxy-L-kynurenine + H2O = 3-hydroxyanthranilate + L-alanine + H(+). It participates in amino-acid degradation; L-kynurenine degradation; L-alanine and anthranilate from L-kynurenine: step 1/1. Its pathway is cofactor biosynthesis; NAD(+) biosynthesis; quinolinate from L-kynurenine: step 2/3. Functionally, catalyzes the cleavage of L-kynurenine (L-Kyn) and L-3-hydroxykynurenine (L-3OHKyn) into anthranilic acid (AA) and 3-hydroxyanthranilic acid (3-OHAA), respectively. This Xanthomonas oryzae pv. oryzae (strain PXO99A) protein is Kynureninase.